Consider the following 261-residue polypeptide: Triosephosphate isomerase (261 aa).

Position 10–12 (asparagine 10–lysine 12) interacts with substrate. Histidine 100 (electrophile) is an active-site residue. The active-site Proton acceptor is the glutamate 172. Residues glycine 178, serine 218, and glycine 239 to glycine 240 contribute to the substrate site.

The protein belongs to the triosephosphate isomerase family. In terms of assembly, homodimer.

The protein localises to the cytoplasm. The enzyme catalyses D-glyceraldehyde 3-phosphate = dihydroxyacetone phosphate. It participates in carbohydrate biosynthesis; gluconeogenesis. It functions in the pathway carbohydrate degradation; glycolysis; D-glyceraldehyde 3-phosphate from glycerone phosphate: step 1/1. Involved in the gluconeogenesis. Catalyzes stereospecifically the conversion of dihydroxyacetone phosphate (DHAP) to D-glyceraldehyde-3-phosphate (G3P). The sequence is that of Triosephosphate isomerase from Mycobacterium avium (strain 104).